A 457-amino-acid polypeptide reads, in one-letter code: RNA-binding suppressor of PAS kinase protein 1 (457 aa).

The region spanning 26–88 (RIFIIELENS…SCVILFKGEN (63 aa)) is the R3H domain. Disordered stretches follow at residues 142–181 (IDGN…IEKE), 195–291 (LNKS…NGGY), and 406–457 (FQGK…KLNI). Residues 145 to 158 (NTRTPNSNLTANSN) show a composition bias toward polar residues. The segment covering 159–181 (KDQKIEIDDKSSTDLEQERIEKE) has biased composition (basic and acidic residues). Serine 198 carries the post-translational modification Phosphoserine. Residues 226–247 (SNTQTSNGSVSSSSPFNSSVTT) are compositionally biased toward low complexity. A compositionally biased stretch (polar residues) spans 248-258 (IQVNKPQQQFY). Basic and acidic residues predominate over residues 418-435 (KRSDDSNSNKNEGIRRAS). 3 positions are modified to phosphoserine: serine 435, serine 439, and serine 447. Basic and acidic residues predominate over residues 443–457 (RDTDSVEMKFDKLNI).

The protein resides in the cytoplasm. The polypeptide is RNA-binding suppressor of PAS kinase protein 1 (RBS1) (Saccharomyces cerevisiae (strain ATCC 204508 / S288c) (Baker's yeast)).